A 35-amino-acid polypeptide reads, in one-letter code: Photosystem II reaction center protein T (35 aa).

A helical transmembrane segment spans residues 3-23 (ALVYTFLLVGTLGIIFFAIFF).

Belongs to the PsbT family. PSII is composed of 1 copy each of membrane proteins PsbA, PsbB, PsbC, PsbD, PsbE, PsbF, PsbH, PsbI, PsbJ, PsbK, PsbL, PsbM, PsbT, PsbY, PsbZ, Psb30/Ycf12, at least 3 peripheral proteins of the oxygen-evolving complex and a large number of cofactors. It forms dimeric complexes.

The protein resides in the plastid. Its subcellular location is the chloroplast thylakoid membrane. Functionally, found at the monomer-monomer interface of the photosystem II (PS II) dimer, plays a role in assembly and dimerization of PSII. PSII is a light-driven water plastoquinone oxidoreductase, using light energy to abstract electrons from H(2)O, generating a proton gradient subsequently used for ATP formation. This is Photosystem II reaction center protein T from Staurastrum punctulatum (Green alga).